We begin with the raw amino-acid sequence, 616 residues long: Chaperone protein DnaK (616 aa).

Thr175 bears the Phosphothreonine; by autocatalysis mark. Residues 579–616 (GGDPSQAGGFDPNAAGGAQQEPHDDNVVDADFKVDDDK) are disordered. A compositionally biased stretch (basic and acidic residues) spans 599–616 (EPHDDNVVDADFKVDDDK).

The protein belongs to the heat shock protein 70 family.

Functionally, acts as a chaperone. This Clostridium botulinum (strain Eklund 17B / Type B) protein is Chaperone protein DnaK.